The sequence spans 259 residues: Hydroxyethylthiazole kinase (259 aa).

Residue Met38 participates in substrate binding. Residues Arg113 and Ser158 each coordinate ATP. Residue Gly185 participates in substrate binding.

Belongs to the Thz kinase family. Mg(2+) is required as a cofactor.

The catalysed reaction is 5-(2-hydroxyethyl)-4-methylthiazole + ATP = 4-methyl-5-(2-phosphooxyethyl)-thiazole + ADP + H(+). It functions in the pathway cofactor biosynthesis; thiamine diphosphate biosynthesis; 4-methyl-5-(2-phosphoethyl)-thiazole from 5-(2-hydroxyethyl)-4-methylthiazole: step 1/1. Its function is as follows. Catalyzes the phosphorylation of the hydroxyl group of 4-methyl-5-beta-hydroxyethylthiazole (THZ). The sequence is that of Hydroxyethylthiazole kinase from Leuconostoc citreum (strain KM20).